Here is a 147-residue protein sequence, read N- to C-terminus: Protegrin-2 (147 aa).

The first 29 residues, 1-29, serve as a signal peptide directing secretion; sequence METQRASLCLGRWSLWLLLLALVVPSASA. The propeptide occupies 30 to 130; the sequence is QALSYREAVL…DITCNEVQGV (101 aa). Positions 61–80 are disordered; sequence DQPPKADEDPGTPKPVSFTV. Cystine bridges form between Cys85–Cys96, Cys107–Cys124, Cys136–Cys145, and Cys138–Cys143. Residue Val146 is modified to Valine amide.

It belongs to the cathelicidin family.

The protein resides in the secreted. Its function is as follows. Microbicidal activity. Active against E.coli, Listeria monocytogenes and C.albicans, in vitro. This is Protegrin-2 (NPG2) from Sus scrofa (Pig).